The following is a 310-amino-acid chain: MSRPRKPKGRPISGWLILDKPLDFGSTEAVSKIKWLFKAQKAGHAGTLDPLASGMLPIALGDATKTVPYVMDGRKIYEFTVAWGEERSTDDLEGEVVRSSADRPAEEAIRALLPKYTGVIAQVPPQFSAIKIGGERAYDLAREGETVDIPAREVEVFRLSLIGSAPSLAQFEIECGKGTYVRSLARDMGRDLGCFGHIASLRRTFVAPFGEEDMVPLADLVALEKIEDEAERLAALDEHLIDTGEALSDLPHIAVNDDQAHRLRMGNPIILRGRDAPLPTPEAYATVQGKLVAIGEIAEGEFRPKRVFAG.

Catalysis depends on D49, which acts as the Nucleophile.

Belongs to the pseudouridine synthase TruB family. Type 1 subfamily.

The catalysed reaction is uridine(55) in tRNA = pseudouridine(55) in tRNA. Its function is as follows. Responsible for synthesis of pseudouridine from uracil-55 in the psi GC loop of transfer RNAs. The protein is tRNA pseudouridine synthase B of Sinorhizobium medicae (strain WSM419) (Ensifer medicae).